Here is a 92-residue protein sequence, read N- to C-terminus: MITVNSTSETLFNFPCDYSIKIFGKNCEKFQNTICTIVERHTHKLNPNKITKKHSSKGNYVSFSIRIIANSRIQLDSINQDLKNCNLVSYVL.

The protein belongs to the UPF0250 family.

This is UPF0250 protein COSY_0496 from Vesicomyosocius okutanii subsp. Calyptogena okutanii (strain HA).